Consider the following 465-residue polypeptide: Mothers against decapentaplegic homolog 5 (465 aa).

Residues proline 13–proline 137 form the MH1 domain. Positions 65, 110, 122, and 127 each coordinate Zn(2+). The disordered stretch occupies residues asparagine 163–aspartate 242. Over residues phenylalanine 173–threonine 183 the composition is skewed to polar residues. Over residues alanine 198–proline 214 the composition is skewed to low complexity. In terms of domain architecture, MH2 spans tryptophan 271–serine 465.

This sequence belongs to the dwarfin/SMAD family. In terms of assembly, may form trimers with the co-SMAD SMAD4.

The protein localises to the cytoplasm. Its subcellular location is the nucleus. In terms of biological role, transcriptional modulator activated by BMP (bone morphogenetic proteins) type 1 receptor kinase. SMAD5 is a receptor-regulated SMAD (R-SMAD). This is Mothers against decapentaplegic homolog 5 (SMAD5) from Gallus gallus (Chicken).